Consider the following 273-residue polypeptide: Probable glycerophosphodiester phosphodiesterase GpdQ (273 aa).

Residues Asp-8, His-10, Asp-50, Asn-80, His-154, His-194, and His-196 each coordinate Fe cation.

The protein belongs to the cyclic nucleotide phosphodiesterase class-III family. It depends on Fe(2+) as a cofactor.

It carries out the reaction a sn-glycero-3-phosphodiester + H2O = an alcohol + sn-glycerol 3-phosphate + H(+). It catalyses the reaction sn-glycero-3-phosphoethanolamine + H2O = ethanolamine + sn-glycerol 3-phosphate + H(+). In terms of biological role, catalyzes the hydrolysis of the 3'-5' phosphodiester bond of glycerophosphodiesters such as glycerophosphorylethanolamine (GPE), a typical phospholipid metabolite. In Arcobacter nitrofigilis (strain ATCC 33309 / DSM 7299 / CCUG 15893 / LMG 7604 / NCTC 12251 / CI) (Campylobacter nitrofigilis), this protein is Probable glycerophosphodiester phosphodiesterase GpdQ.